The sequence spans 432 residues: Ubiquitin-like modifier-activating enzyme 5 (432 aa).

Positions 25 to 47 are disordered; it reads ETKKNQTPSVLKGPTVSQERPSA. Residues 29–44 show a composition bias toward polar residues; that stretch reads NQTPSVLKGPTVSQER. Positions 96, 117, 140, 163, and 196 each coordinate ATP. Cys238 and Cys241 together coordinate Zn(2+). Cys262 acts as the Glycyl thioester intermediate in catalysis. Residues Cys315 and Cys320 each coordinate Zn(2+). A disordered region spans residues 363–406; the sequence is DTTEAPSSSAATEVAPGLKFAYEPTQTPKKNSSDNLKLSPSQAV. Over residues 386-406 the composition is skewed to polar residues; that stretch reads PTQTPKKNSSDNLKLSPSQAV.

It belongs to the ubiquitin-activating E1 family. UBA5 subfamily. Interacts with ufc-1.

E1-like enzyme which activates ufm-1. Required for interaction between ufm-1 and ufc-1. This is Ubiquitin-like modifier-activating enzyme 5 from Caenorhabditis briggsae.